The primary structure comprises 355 residues: Phosphoribosylformylglycinamidine cyclo-ligase (355 aa).

It belongs to the AIR synthase family.

It localises to the cytoplasm. It catalyses the reaction 2-formamido-N(1)-(5-O-phospho-beta-D-ribosyl)acetamidine + ATP = 5-amino-1-(5-phospho-beta-D-ribosyl)imidazole + ADP + phosphate + H(+). The protein operates within purine metabolism; IMP biosynthesis via de novo pathway; 5-amino-1-(5-phospho-D-ribosyl)imidazole from N(2)-formyl-N(1)-(5-phospho-D-ribosyl)glycinamide: step 2/2. This Paraburkholderia phymatum (strain DSM 17167 / CIP 108236 / LMG 21445 / STM815) (Burkholderia phymatum) protein is Phosphoribosylformylglycinamidine cyclo-ligase.